The primary structure comprises 332 residues: DNA-directed RNA polymerase subunit alpha (332 aa).

Residues 1-234 are alpha N-terminal domain (alpha-NTD); it reads MTVTISQVLR…DQLSVFGDFT (234 aa). Residues 248–332 form an alpha C-terminal domain (alpha-CTD) region; sequence VDPVLLRPID…PGVSQYGMLG (85 aa).

It belongs to the RNA polymerase alpha chain family. In terms of assembly, homodimer. The RNAP catalytic core consists of 2 alpha, 1 beta, 1 beta' and 1 omega subunit. When a sigma factor is associated with the core the holoenzyme is formed, which can initiate transcription.

The catalysed reaction is RNA(n) + a ribonucleoside 5'-triphosphate = RNA(n+1) + diphosphate. Functionally, DNA-dependent RNA polymerase catalyzes the transcription of DNA into RNA using the four ribonucleoside triphosphates as substrates. The chain is DNA-directed RNA polymerase subunit alpha from Xylella fastidiosa (strain M12).